Reading from the N-terminus, the 318-residue chain is MDTQDMTAFPHRHLLGIEGLTATDVELILDLADGYVEQNRSPGRKSAILSGLTVVNLFFENSTRTRTSFELAAKRLGGDCINMSSDGSSVKKGESLIDTAMTLNAMHLDVLVVRHQESGAPLLLSSKVNCAVINAGDGAHEHPTQALLDALTIRRHKGTLRGLTVAICGDILHSRVARSNIHLLNIMGARVRVVAPPTLLPGAVDRLGVEVHHSMATGLKDADIVMMLRLQLERMQGQYLPSQREYFRFYGLDYDKLAVARPDALIMHPGPMNRGVEIDSLVADDIHRSVILEQVELGVAVRMACLDLLTRGHRGTGA.

The carbamoyl phosphate site is built by arginine 64 and threonine 65. Residue lysine 92 participates in L-aspartate binding. Residues arginine 114, histidine 142, and glutamine 145 each coordinate carbamoyl phosphate. Positions 175 and 229 each coordinate L-aspartate. Carbamoyl phosphate-binding residues include glycine 270 and proline 271.

It belongs to the aspartate/ornithine carbamoyltransferase superfamily. ATCase family. Heterododecamer (2C3:3R2) of six catalytic PyrB chains organized as two trimers (C3), and six regulatory PyrI chains organized as three dimers (R2).

It carries out the reaction carbamoyl phosphate + L-aspartate = N-carbamoyl-L-aspartate + phosphate + H(+). Its pathway is pyrimidine metabolism; UMP biosynthesis via de novo pathway; (S)-dihydroorotate from bicarbonate: step 2/3. Functionally, catalyzes the condensation of carbamoyl phosphate and aspartate to form carbamoyl aspartate and inorganic phosphate, the committed step in the de novo pyrimidine nucleotide biosynthesis pathway. The sequence is that of Aspartate carbamoyltransferase catalytic subunit from Rhodospirillum centenum (strain ATCC 51521 / SW).